The primary structure comprises 93 residues: Aspartyl/glutamyl-tRNA(Asn/Gln) amidotransferase subunit C (93 aa).

Belongs to the GatC family. As to quaternary structure, heterotrimer of A, B and C subunits.

It catalyses the reaction L-glutamyl-tRNA(Gln) + L-glutamine + ATP + H2O = L-glutaminyl-tRNA(Gln) + L-glutamate + ADP + phosphate + H(+). It carries out the reaction L-aspartyl-tRNA(Asn) + L-glutamine + ATP + H2O = L-asparaginyl-tRNA(Asn) + L-glutamate + ADP + phosphate + 2 H(+). Functionally, allows the formation of correctly charged Asn-tRNA(Asn) or Gln-tRNA(Gln) through the transamidation of misacylated Asp-tRNA(Asn) or Glu-tRNA(Gln) in organisms which lack either or both of asparaginyl-tRNA or glutaminyl-tRNA synthetases. The reaction takes place in the presence of glutamine and ATP through an activated phospho-Asp-tRNA(Asn) or phospho-Glu-tRNA(Gln). This chain is Aspartyl/glutamyl-tRNA(Asn/Gln) amidotransferase subunit C, found in Methanothrix thermoacetophila (strain DSM 6194 / JCM 14653 / NBRC 101360 / PT) (Methanosaeta thermophila).